A 106-amino-acid chain; its full sequence is Nucleoid-associated protein Smal_0858 (106 aa).

Positions 81–106 (IDAESKSKMGSATAGMQLPPGMKLPF) are disordered.

It belongs to the YbaB/EbfC family. As to quaternary structure, homodimer.

It is found in the cytoplasm. Its subcellular location is the nucleoid. Functionally, binds to DNA and alters its conformation. May be involved in regulation of gene expression, nucleoid organization and DNA protection. The protein is Nucleoid-associated protein Smal_0858 of Stenotrophomonas maltophilia (strain R551-3).